The primary structure comprises 1196 residues: ATP-dependent helicase/deoxyribonuclease subunit B (1196 aa).

[4Fe-4S] cluster-binding residues include Cys-823, Cys-1149, Cys-1152, and Cys-1158.

Belongs to the helicase family. AddB/RexB type 2 subfamily. As to quaternary structure, heterodimer of AddA and RexB. Mg(2+) is required as a cofactor. It depends on [4Fe-4S] cluster as a cofactor.

Its function is as follows. The heterodimer acts as both an ATP-dependent DNA helicase and an ATP-dependent, dual-direction single-stranded exonuclease. Recognizes the chi site generating a DNA molecule suitable for the initiation of homologous recombination. This subunit has 5' -&gt; 3' nuclease activity but not helicase activity. This is ATP-dependent helicase/deoxyribonuclease subunit B from Enterococcus faecalis (strain ATCC 700802 / V583).